The chain runs to 577 residues: 2-succinyl-5-enolpyruvyl-6-hydroxy-3-cyclohexene-1-carboxylate synthase (577 aa).

Belongs to the TPP enzyme family. MenD subfamily. In terms of assembly, homodimer. It depends on Mg(2+) as a cofactor. Mn(2+) serves as cofactor. Thiamine diphosphate is required as a cofactor.

The catalysed reaction is isochorismate + 2-oxoglutarate + H(+) = 5-enolpyruvoyl-6-hydroxy-2-succinyl-cyclohex-3-ene-1-carboxylate + CO2. The protein operates within quinol/quinone metabolism; 1,4-dihydroxy-2-naphthoate biosynthesis; 1,4-dihydroxy-2-naphthoate from chorismate: step 2/7. It functions in the pathway quinol/quinone metabolism; menaquinone biosynthesis. In terms of biological role, catalyzes the thiamine diphosphate-dependent decarboxylation of 2-oxoglutarate and the subsequent addition of the resulting succinic semialdehyde-thiamine pyrophosphate anion to isochorismate to yield 2-succinyl-5-enolpyruvyl-6-hydroxy-3-cyclohexene-1-carboxylate (SEPHCHC). This Enterococcus faecalis (strain ATCC 700802 / V583) protein is 2-succinyl-5-enolpyruvyl-6-hydroxy-3-cyclohexene-1-carboxylate synthase.